The chain runs to 386 residues: Threonine--tRNA ligase editing subunit (386 aa).

This sequence belongs to the class-II aminoacyl-tRNA synthetase family. Archaea-specific ThrRS editing domain subfamily. As to quaternary structure, probably interacts with its catalytic subunit (AC Q97VW8); a subunit fusion (in the order edit-catalytic) is fully functional.

It is found in the cytoplasm. In terms of biological role, freestanding tRNA editing subunit of threonine--tRNA ligase, the catalytic subunit is AC Q97VW8. Deacylates (edits) mischarged L-seryl-tRNA(Thr) in trans, removing L-serine, has no aminoacylation activity. In vitro when both subunits are present, or if the 2 subunits are fused, L-seryl-tRNA(Thr) is no longer produced. Has no activity on correctly acylated L-seryl-tRNA(Ser) or L-threonyl-tRNA(Thr). Editing is probably catalyzed by the 2'-OH of A76 of tRNA(Thr). This is Threonine--tRNA ligase editing subunit from Saccharolobus solfataricus (strain ATCC 35092 / DSM 1617 / JCM 11322 / P2) (Sulfolobus solfataricus).